The sequence spans 511 residues: Sorting nexin MVP1 (511 aa).

A disordered region spans residues methionine 1–glycine 36. Residues valine 25 to glycine 36 are compositionally biased toward polar residues. A PX domain is found at aspartate 128–threonine 247. Residues arginine 172, serine 174, lysine 198, and arginine 213 each contribute to the a 1,2-diacyl-sn-glycero-3-phospho-(1D-myo-inositol-3-phosphate) site.

This sequence belongs to the sorting nexin family. As to quaternary structure, homodimer. Forms an autoinhibited tetramer consisting of 2 homodimers that self-interact, wherein the membrane-interacting BAR surfaces are sequestered and the PX lipid-binding sites are occluded. Interacts with VPS1.

The protein resides in the cytoplasm. Its subcellular location is the endosome membrane. Functionally, required for vacuolar protein sorting. Component of the retromer-mediated endosome-to-Golgi retrograde pathway. Required for efficient cargo export from the endosome, promoting VPS1-mediated fission of retromer-coated tubules that bud from the endosome. The protein is Sorting nexin MVP1 (MVP1) of Saccharomyces cerevisiae (strain ATCC 204508 / S288c) (Baker's yeast).